A 487-amino-acid polypeptide reads, in one-letter code: 1-hydroxycarotenoid 3,4-desaturase (487 aa).

FAD-binding positions include G12, E31, K39, 55 to 56 (SL), V247, N275, L431, G461, and 468 to 469 (GI).

It belongs to the carotenoid/retinoid oxidoreductase family. As to quaternary structure, monomer.

The enzyme catalyses rhodopin + A = (3E)-3,4-didehydrorhodopin + AH2. It carries out the reaction 1'-hydroxy-gamma-carotene + A = 1'-hydroxytorulene + AH2. The catalysed reaction is 1-hydroxy-all-trans-1,2-dihydro-neurosporene + A = demethylspheroidene + AH2. It catalyses the reaction 1,1'-dihydroxy-1,1',2,2'-tetrahydroneurosporene + A = 1'-hydroxy-demethylspheroidene + AH2. The enzyme catalyses 1,1'-dihydroxy-1,1',2,2'-tetrahydrolycopene + A = 1,1'-dihydroxy-3,4-didehydro-1,2-dihydrolycopene + AH2. The protein operates within carotenoid biosynthesis. In terms of biological role, catalyzes the introduction of a C-3,4 double bond into 1'-hydroxy-gamma-carotene and rhodopin (1-hydroxylycopene) to yield 1'-hydroxytorulene and (3E)-3,4-didehydrorhodopin, respectively. Can also use 1-hydroxy-all-trans-1,2-dihydro-neurosporene, 1,1'-dihydroxy-1,1',2,2'-tetrahydroneurosporene and 1,1'-dihydroxy-1,1',2,2'-tetrahydrolycopene. Probably involved in the synthesis of myxol, a gamma-carotene derivative. May use FAD as a proton acceptor. The chain is 1-hydroxycarotenoid 3,4-desaturase from Nonlabens dokdonensis (strain DSM 17205 / KCTC 12402 / DSW-6) (Donghaeana dokdonensis).